We begin with the raw amino-acid sequence, 372 residues long: MTATRGLEGVVATTSSVSSIIDDTLTYVGYDIDDLTENASFEEIIYLLWHLRLPNKKELEELKQQLAKEAAVPQEIIEHFKSYSLENVHPMAALRTAISLLGLLDSEADTMNPEANYRKAIRLQAKVPGLVAAFSRIRKGLEPVEPREDYGIAENFLYTLNGEEPSPIEVEAFNKALILHADHELNASTFTARVCVATLSDIYSGITAAIGALKGPLHGGANEGVMKMLTEIGEVENAEPYIRAKLEKKEKIMGFGHRVYKHGDPRAKHLKEMSKRLTNLTGESKWYEMSIRIEDIVTSEKKLPPNVDFYSASVYHSLGIDHDLFTPIFAVSRMSGWLAHILEQYDNNRLIRPRADYTGPDKQKFVPIEERA.

Residue histidine 257 is part of the active site. The residue at position 284 (serine 284) is a Phosphoserine. Aspartate 308 is a catalytic residue.

This sequence belongs to the citrate synthase family. As to quaternary structure, homodimer.

The catalysed reaction is oxaloacetate + acetyl-CoA + H2O = citrate + CoA + H(+). It participates in carbohydrate metabolism; tricarboxylic acid cycle; isocitrate from oxaloacetate: step 1/2. Functionally, might regulate the synthesis and function of enzymes involved in later enzymatic steps of Krebs cycle. Loss in activity results in sporulation defect. The protein is Citrate synthase 2 (citZ) of Bacillus subtilis (strain 168).